Consider the following 425-residue polypeptide: Serine--tRNA ligase (425 aa).

Thr-233–Glu-235 provides a ligand contact to L-serine. Arg-264–Glu-266 lines the ATP pocket. Glu-287 is an L-serine binding site. ATP is bound at residue Glu-351–Ser-354. Ser-387 serves as a coordination point for L-serine.

The protein belongs to the class-II aminoacyl-tRNA synthetase family. Type-1 seryl-tRNA synthetase subfamily. In terms of assembly, homodimer. The tRNA molecule binds across the dimer.

The protein resides in the cytoplasm. The enzyme catalyses tRNA(Ser) + L-serine + ATP = L-seryl-tRNA(Ser) + AMP + diphosphate + H(+). The catalysed reaction is tRNA(Sec) + L-serine + ATP = L-seryl-tRNA(Sec) + AMP + diphosphate + H(+). It functions in the pathway aminoacyl-tRNA biosynthesis; selenocysteinyl-tRNA(Sec) biosynthesis; L-seryl-tRNA(Sec) from L-serine and tRNA(Sec): step 1/1. Its function is as follows. Catalyzes the attachment of serine to tRNA(Ser). Is also able to aminoacylate tRNA(Sec) with serine, to form the misacylated tRNA L-seryl-tRNA(Sec), which will be further converted into selenocysteinyl-tRNA(Sec). The chain is Serine--tRNA ligase from Thermotoga sp. (strain RQ2).